The following is a 902-amino-acid chain: Potassium/sodium hyperpolarization-activated cyclic nucleotide-gated channel 1 (902 aa).

Residues 1 to 75 (MEGGGKPNSA…PAGSFEDAEG (75 aa)) form a disordered region. Topologically, residues 1–131 (MEGGGKPNSA…WIIHPYSDFR (131 aa)) are cytoplasmic. The chain crosses the membrane as a helical span at residues 132–153 (FYWDLIMLIMMVGNLVIIPVGI). The Extracellular segment spans residues 154–162 (TFFTEQTTT). Residues 163 to 183 (PWIIFNVASDTVFLLDLIMNF) traverse the membrane as a helical segment. Residues 184–204 (RTGTVNEDSSEIILDPKVIKM) lie on the Cytoplasmic side of the membrane. A helical membrane pass occupies residues 205–225 (NYLKSWFVVDFISSIPVDYIF). At 226 to 249 (LIVEKGMDSEVYKTARALRIVRFT) the chain is on the extracellular side. Residues 250 to 270 (KILSLLRLLRLSRLIRYIHQW) traverse the membrane as a helical; Voltage-sensor segment. At 271 to 284 (EEIFHMTYDLASAV) the chain is on the cytoplasmic side. A helical membrane pass occupies residues 285–307 (VRIFNLIGMMLLLCHWDGCLQFL). The Extracellular segment spans residues 308-333 (VPLLQDFPPDCWVSLNEMVNDSWGKQ). Asn-327 carries N-linked (GlcNAc...) asparagine glycosylation. An intramembrane region (pore-forming) is located at residues 334 to 355 (YSYALFKAMSHMLCIGYGAQAP). The Selectivity filter motif lies at 347–351 (CIGYG). At 356–360 (VSMSD) the chain is on the extracellular side. Residues 361–381 (LWITMLSMIVGATCYAMFVGH) traverse the membrane as a helical segment. Residues 382 to 902 (ATALIQSLDS…AEKPRFASNL (521 aa)) lie on the Cytoplasmic side of the membrane. 3',5'-cyclic AMP is bound by residues Gly-528, Glu-529, Cys-531, Arg-538, Thr-539, Arg-579, and Arg-582. 3 disordered regions span residues 634 to 681 (TALN…QPSA), 713 to 824 (ASQL…VGES), and 858 to 902 (MSSG…ASNL). 3 stretches are compositionally biased toward low complexity: residues 639–680 (TSST…PQPS), 720–736 (QQPQ…QTQP), and 744–769 (QPQQ…QQPQ). Residues 770–793 (TPGSSTPKNEVHKSTQALHNTNLT) are compositionally biased toward polar residues. The span at 867-877 (RGVPPAPPPPA) shows a compositional bias: pro residues. Residues 889-902 (KDPDAEKPRFASNL) are compositionally biased toward basic and acidic residues.

It belongs to the potassium channel HCN family. In terms of assembly, homotetramer. Heterotetramer with HCN2. The potassium channel is composed of a homo- or heterotetrameric complex of pore-forming subunits. Interacts with KCNE2. Interacts with the SH3 domain of CSK. Highly expressed in cerebral cortex, cerebellum, throughout the hippocampus, in medial habenula, anterior dorsal nucleus in the thalamus, tenia tecta, several nuclei of the general motor system and in optic nerve layer. Detected in a subset of elongated cells in taste buds.

The protein resides in the cell membrane. It carries out the reaction Na(+)(in) = Na(+)(out). The catalysed reaction is K(+)(in) = K(+)(out). Activated by cAMP, and at 10-100 times higher concentrations, also by cGMP. cAMP binding promotes tetramerization and formation of an active channel. Compared to other family members, cAMP has less stimulatory effect on HCN1 because part of the molecules already contain bound cAMP and form homotetramers when cAMP levels are low, this inherent tetramerization in HCN1 results in a weaker response to increased cAMP. Its function is as follows. Hyperpolarization-activated ion channel that are permeable to sodium and potassium ions. Exhibits weak selectivity for potassium over sodium ions. Contributes to the native pacemaker currents in heart (If) and in neurons (Ih). Participates in cerebellar mechanisms of motor learning. May mediate responses to sour stimuli. The chain is Potassium/sodium hyperpolarization-activated cyclic nucleotide-gated channel 1 (Hcn1) from Rattus norvegicus (Rat).